Reading from the N-terminus, the 153-residue chain is 6,7-dimethyl-8-ribityllumazine synthase (153 aa).

5-amino-6-(D-ribitylamino)uracil contacts are provided by residues Phe-22, 56–58, and 80–82; these read AFE and AVI. Residue 85 to 86 participates in (2S)-2-hydroxy-3-oxobutyl phosphate binding; the sequence is ST. His-88 serves as the catalytic Proton donor. Residue Phe-113 coordinates 5-amino-6-(D-ribitylamino)uracil. Position 127 (Arg-127) interacts with (2S)-2-hydroxy-3-oxobutyl phosphate.

The protein belongs to the DMRL synthase family.

It catalyses the reaction (2S)-2-hydroxy-3-oxobutyl phosphate + 5-amino-6-(D-ribitylamino)uracil = 6,7-dimethyl-8-(1-D-ribityl)lumazine + phosphate + 2 H2O + H(+). It functions in the pathway cofactor biosynthesis; riboflavin biosynthesis; riboflavin from 2-hydroxy-3-oxobutyl phosphate and 5-amino-6-(D-ribitylamino)uracil: step 1/2. In terms of biological role, catalyzes the formation of 6,7-dimethyl-8-ribityllumazine by condensation of 5-amino-6-(D-ribitylamino)uracil with 3,4-dihydroxy-2-butanone 4-phosphate. This is the penultimate step in the biosynthesis of riboflavin. The polypeptide is 6,7-dimethyl-8-ribityllumazine synthase (Fusobacterium nucleatum subsp. nucleatum (strain ATCC 25586 / DSM 15643 / BCRC 10681 / CIP 101130 / JCM 8532 / KCTC 2640 / LMG 13131 / VPI 4355)).